The following is a 378-amino-acid chain: Squalene methyltransferase 2 (378 aa).

The chain crosses the membrane as a helical span at residues 17-37 (LLTVKGATGLIAALILGYIII).

It belongs to the class I-like SAM-binding methyltransferase superfamily. Erg6/SMT family.

It is found in the microsome membrane. The enzyme catalyses squalene + 2 S-adenosyl-L-methionine = 3,22-dimethyl-1,2,23,24-tetradehydro-2,3,22,23-tetrahydrosqualene + 2 S-adenosyl-L-homocysteine + 2 H(+). Functionally, converts squalene to mono- and dimethyl derivatives, but not to tri- and tetramethylated products. Unable to methylate cycloartenol, zymosterol or lanosterol. Methylates both C-3 and C22 positions, but only C-3 position in monomethylated products. Produces mainly monomethylated squalene and only 20% of dimethylated squalene. This Botryococcus braunii (Green alga) protein is Squalene methyltransferase 2 (TMT-2).